We begin with the raw amino-acid sequence, 449 residues long: Na(+)/H(+) antiporter NhaA 1 (449 aa).

The next 11 helical transmembrane spans lie at 38–58, 79–99, 117–137, 145–165, 175–195, 198–218, 240–260, 311–331, 347–367, 390–410, and 422–442; these read GILL…PWAA, FTIR…VVGM, VLPL…YAAF, AGWA…LTLV, VFLT…IALF, SGLH…LACL, MHHG…FMPA, FVHL…ALAN, PLPL…IFLF, GVAV…GLAF, and LGIL…LRFV.

The protein belongs to the NhaA Na(+)/H(+) (TC 2.A.33) antiporter family.

The protein resides in the cell inner membrane. The catalysed reaction is Na(+)(in) + 2 H(+)(out) = Na(+)(out) + 2 H(+)(in). Na(+)/H(+) antiporter that extrudes sodium in exchange for external protons. This chain is Na(+)/H(+) antiporter NhaA 1, found in Myxococcus xanthus (strain DK1622).